Reading from the N-terminus, the 639-residue chain is Chaperone protein DnaK (639 aa).

Phosphothreonine; by autocatalysis is present on Thr-196. The segment at Ala-592 to Lys-639 is disordered. Positions Ala-601–Gly-613 are enriched in low complexity.

The protein belongs to the heat shock protein 70 family.

Functionally, acts as a chaperone. This is Chaperone protein DnaK from Chlorobium limicola (strain DSM 245 / NBRC 103803 / 6330).